The sequence spans 157 residues: Cell cycle regulator of non-homologous end joining (157 aa).

Methionine 1 is subject to N-acetylmethionine. Positions 1–21 (METLKSKTKTRVLPSWMTAPV) match the KBM motif. Positions 80–91 (KPWEQRSLEATD) are enriched in basic and acidic residues. Positions 80-148 (KPWEQRSLEA…EEEKEEEDAL (69 aa)) are disordered. Low complexity predominate over residues 96-106 (SPPCSSSPGSS). The XLM signature appears at 147-157 (ALKYVREIFFS).

In terms of assembly, interacts (via KBM motif) with XRCC5/Ku80 and XRCC6/Ku70 heterodimer. Interacts (via XLF motif) with TRIM28/KAP1, ATM, MRE11, NBN and RAD50. Interacts with splicing factor SF3B1. Interacts with ERCC6L2; this interaction is DNA independent.

It localises to the cytoplasm. Its subcellular location is the nucleus. It is found in the chromosome. Functionally, cell-cycle-specific regulator of classical non-homologous end joining (NHEJ) of DNA double-strand break (DSB) repair, which can act both as an activator or inhibitor of NHEJ, depending on the cell cycle phase. Acts as a regulator of DNA repair pathway choice by specifically inhibiting classical NHEJ during the S and G2 phases, thereby promoting error-free repair by homologous recombination during cell cycle phases when sister chromatids are present. Preferentially protects single-stranded overhangs at break sites by inhibiting classical NHEJ, thereby creating a local environment that favors homologous recombination. Acts via interaction with XRCC5/Ku80 and XRCC6/Ku70. In contrast, acts as an activator of NHEJ during G1 phase of the cell cycle: promotes classical NHEJ in G1 phase cells via multivalent interactions that increase the affinity of DNA damage response proteins for DSB-associated chromatin. Also involved in immunoglobulin V(D)J recombination. May also act as an indirect regulator of proteasome. In Mus musculus (Mouse), this protein is Cell cycle regulator of non-homologous end joining.